We begin with the raw amino-acid sequence, 434 residues long: Trigger factor (434 aa).

Positions Gly161–Pro246 constitute a PPIase FKBP-type domain.

This sequence belongs to the FKBP-type PPIase family. Tig subfamily.

The protein resides in the cytoplasm. It catalyses the reaction [protein]-peptidylproline (omega=180) = [protein]-peptidylproline (omega=0). Its function is as follows. Involved in protein export. Acts as a chaperone by maintaining the newly synthesized protein in an open conformation. Functions as a peptidyl-prolyl cis-trans isomerase. The protein is Trigger factor of Vibrio parahaemolyticus serotype O3:K6 (strain RIMD 2210633).